The sequence spans 327 residues: Voltage-dependent calcium channel gamma-4 subunit (327 aa).

Over 1 to 9 (MVRCDRGLQ) the chain is Cytoplasmic. Residues 10-30 (MLLTTAGAFAAFSLMAIAIGT) traverse the membrane as a helical segment. Over 31 to 107 (DYWLYSSAHI…EYLLRIVRAS (77 aa)) the chain is Extracellular. N-linked (GlcNAc...) asparagine glycosylation is found at asparagine 42 and asparagine 45. The chain crosses the membrane as a helical span at residues 108–128 (SVFPILSTILLLLGGLCIGAG). Over 129-136 (RIYSRKNN) the chain is Cytoplasmic. Residues 137-157 (IVLSAGILFVAAGLSNIIGII) traverse the membrane as a helical segment. The Extracellular segment spans residues 158–186 (VYISSNTGDPSDKRDEDKKNHYNYGWSFY). The chain crosses the membrane as a helical span at residues 187-207 (FGALSFIVAETVGVLAVNIYI). Topologically, residues 208–327 (EKNKELRFKT…SMLNRRTTPV (120 aa)) are cytoplasmic. The interval 235–261 (SYRYRRRRSRSSSRSTEASPSRDVSPM) is disordered. Residues 246-256 (SSRSTEASPSR) show a composition bias toward low complexity. The residue at position 259 (serine 259) is a Phosphoserine.

Belongs to the PMP-22/EMP/MP20 family. CACNG subfamily. In terms of assembly, interacts with CACNA1C. Identified in a complex with the L-type calcium channel subunits CACNA1C, CACNA2D1 and either CACNB1 or CACNB2. Acts as an auxiliary subunit for AMPA-selective glutamate receptors (AMPARs). Interacts with GRIA1. As to expression, detected in heart left ventricle.

The protein resides in the cell membrane. Regulates the activity of L-type calcium channels that contain CACNA1C as pore-forming subunit. Regulates the trafficking and gating properties of AMPA-selective glutamate receptors (AMPARs), including GRIA1 and GRIA4. Promotes their targeting to the cell membrane and synapses and modulates their gating properties by slowing their rates of activation, deactivation and desensitization and by mediating their resensitization. The protein is Voltage-dependent calcium channel gamma-4 subunit (CACNG4) of Homo sapiens (Human).